A 367-amino-acid chain; its full sequence is uncharacterized protein (367 aa).

Positions leucine 4–isoleucine 234 constitute an ABC transporter domain. An ATP-binding site is contributed by glycine 36–serine 43.

This sequence belongs to the ABC transporter superfamily.

This is an uncharacterized protein from Bacillus subtilis (strain 168).